A 347-amino-acid polypeptide reads, in one-letter code: Transcription factor JunB (347 aa).

Residues Lys-4, Lys-33, and Lys-36 each participate in a glycyl lysine isopeptide (Lys-Gly) (interchain with G-Cter in SUMO2) cross-link. The tract at residues 51–73 (KAPGARGPGPEGGGGGSYFSGQG) is disordered. Gly residues predominate over residues 56 to 68 (RGPGPEGGGGGSY). Lys-81 is covalently cross-linked (Glycyl lysine isopeptide (Lys-Gly) (interchain with G-Cter in SUMO2)). Thr-102 and Thr-104 each carry phosphothreonine. Ser-117 bears the Phosphoserine mark. Lys-141 participates in a covalent cross-link: Glycyl lysine isopeptide (Lys-Gly) (interchain with G-Cter in SUMO2). Residues 239–253 (FKEEPQTVPEARSRD) show a composition bias toward basic and acidic residues. The disordered stretch occupies residues 239–260 (FKEEPQTVPEARSRDATPPVSP). The residue at position 240 (Lys-240) is an N6-acetyllysine; alternate. Residue Lys-240 forms a Glycyl lysine isopeptide (Lys-Gly) (interchain with G-Cter in SUMO1); alternate linkage. Lys-240 participates in a covalent cross-link: Glycyl lysine isopeptide (Lys-Gly) (interchain with G-Cter in SUMO2); alternate. At Ser-251 the chain carries Phosphoserine. Position 255 is a phosphothreonine (Thr-255). The residue at position 259 (Ser-259) is a Phosphoserine. A basic motif region spans residues 268–295 (RIKVERKRLRNRLAATKCRKRKLERIAR). Residues 268–331 (RIKVERKRLR…AQLKQKVMTH (64 aa)) enclose the bZIP domain. The tract at residues 296–324 (LEDKVKTLKAENAGLSSTAGLLREQVAQL) is leucine-zipper. Residue Lys-343 forms a Glycyl lysine isopeptide (Lys-Gly) (interchain with G-Cter in SUMO2) linkage.

This sequence belongs to the bZIP family. Jun subfamily. Binds DNA as a homodimer or as a heterodimer with another member of the Jun/Fos family. Component of an AP-1 transcription factor complex composed of JUN-FOS heterodimers composed of JUN-FOS heterodimers. As part of the AP-1 transcription factor complex, forms heterodimers with FOSB, thereby binding to the AP-1 consensus sequence and stimulating transcription. Interacts with ITCH (via its WW domains). Post-translationally, ubiquitinated by ITCH, leading to its degradation.

It localises to the nucleus. Functionally, transcription factor involved in regulating gene activity following the primary growth factor response. Binds to the DNA sequence 5'-TGA[GC]TCA-3'. Heterodimerizes with proteins of the FOS family to form an AP-1 transcription complex, thereby enhancing its DNA binding activity to an AP-1 consensus sequence and its transcriptional activity. The sequence is that of Transcription factor JunB (JUNB) from Homo sapiens (Human).